Here is a 214-residue protein sequence, read N- to C-terminus: Putative 3-methyladenine DNA glycosylase (214 aa).

The protein belongs to the DNA glycosylase MPG family.

The sequence is that of Putative 3-methyladenine DNA glycosylase from Gloeobacter violaceus (strain ATCC 29082 / PCC 7421).